The following is a 260-amino-acid chain: Ribosomal RNA small subunit methyltransferase J (260 aa).

Residues Arg101–Asp102, Glu117–Arg118, Ser153–Ser154, and Asp176 each bind S-adenosyl-L-methionine.

Belongs to the methyltransferase superfamily. RsmJ family.

It localises to the cytoplasm. It catalyses the reaction guanosine(1516) in 16S rRNA + S-adenosyl-L-methionine = N(2)-methylguanosine(1516) in 16S rRNA + S-adenosyl-L-homocysteine + H(+). Functionally, specifically methylates the guanosine in position 1516 of 16S rRNA. This Aliivibrio salmonicida (strain LFI1238) (Vibrio salmonicida (strain LFI1238)) protein is Ribosomal RNA small subunit methyltransferase J.